The primary structure comprises 351 residues: Transaldolase (351 aa).

The Schiff-base intermediate with substrate role is filled by K138.

Belongs to the transaldolase family. Type 2 subfamily.

The protein localises to the cytoplasm. The catalysed reaction is D-sedoheptulose 7-phosphate + D-glyceraldehyde 3-phosphate = D-erythrose 4-phosphate + beta-D-fructose 6-phosphate. It functions in the pathway carbohydrate degradation; pentose phosphate pathway; D-glyceraldehyde 3-phosphate and beta-D-fructose 6-phosphate from D-ribose 5-phosphate and D-xylulose 5-phosphate (non-oxidative stage): step 2/3. Transaldolase is important for the balance of metabolites in the pentose-phosphate pathway. In Neisseria gonorrhoeae (strain ATCC 700825 / FA 1090), this protein is Transaldolase.